The primary structure comprises 219 residues: Probable GTP-binding protein EngB (219 aa).

The EngB-type G domain maps to 33 to 217; that stretch reads GPLEIAFAGR…RAAICETVGH (185 aa). GTP is bound by residues 41-48, 68-72, 95-98, 162-165, and 196-198; these read GRSNVGKS, GRTQE, DMPG, TKTD, and TSS. 2 residues coordinate Mg(2+): serine 48 and threonine 70.

The protein belongs to the TRAFAC class TrmE-Era-EngA-EngB-Septin-like GTPase superfamily. EngB GTPase family. It depends on Mg(2+) as a cofactor.

Functionally, necessary for normal cell division and for the maintenance of normal septation. This Allorhizobium ampelinum (strain ATCC BAA-846 / DSM 112012 / S4) (Agrobacterium vitis (strain S4)) protein is Probable GTP-binding protein EngB.